Reading from the N-terminus, the 348-residue chain is DNA-directed RNA polymerase subunit alpha (348 aa).

Residues 1 to 243 (MLIKQGDRLI…DQISVFINFD (243 aa)) form an alpha N-terminal domain (alpha-NTD) region. Residues 260-348 (VNENLFKGID…WLKRKQQNEA (89 aa)) are alpha C-terminal domain (alpha-CTD).

The protein belongs to the RNA polymerase alpha chain family. Homodimer. The RNAP catalytic core consists of 2 alpha, 1 beta, 1 beta' and 1 omega subunit. When a sigma factor is associated with the core the holoenzyme is formed, which can initiate transcription.

The enzyme catalyses RNA(n) + a ribonucleoside 5'-triphosphate = RNA(n+1) + diphosphate. Functionally, DNA-dependent RNA polymerase catalyzes the transcription of DNA into RNA using the four ribonucleoside triphosphates as substrates. The polypeptide is DNA-directed RNA polymerase subunit alpha (Oleidesulfovibrio alaskensis (strain ATCC BAA-1058 / DSM 17464 / G20) (Desulfovibrio alaskensis)).